Here is a 250-residue protein sequence, read N- to C-terminus: PTB-containing, cubilin and LRP1-interacting protein (250 aa).

One can recognise a PID domain in the interval 93–250 (VTYLGKVSTT…VSQELESDDG (158 aa)). Residues 229 to 250 (DGRIHSNSSSEEVSQELESDDG) are disordered. Phosphoserine is present on residues Ser-236 and Ser-247. Over residues 241 to 250 (VSQELESDDG) the composition is skewed to acidic residues.

In terms of assembly, found in a complex with PID1/PCLI1, LRP1 and CUBNI. Interacts with LRP1 and CUBN. Expressed in subcutaneous fat, heart, skeletal muscle, brain, colon, thymus, spleen, kidney, liver, small intestine, placenta, lung and peripheral blood leukocyte.

It localises to the cytoplasm. In terms of biological role, increases proliferation of preadipocytes without affecting adipocytic differentiation. The polypeptide is PTB-containing, cubilin and LRP1-interacting protein (PID1) (Homo sapiens (Human)).